We begin with the raw amino-acid sequence, 418 residues long: Diaminopimelate decarboxylase (418 aa).

N6-(pyridoxal phosphate)lysine is present on K53. Residues G223 and 264 to 267 (EPGR) contribute to the pyridoxal 5'-phosphate site. The substrate site is built by R267, R303, and Y307. C338 serves as the catalytic Proton donor. Residues E339 and Y374 each contribute to the substrate site. Residue Y374 coordinates pyridoxal 5'-phosphate.

It belongs to the Orn/Lys/Arg decarboxylase class-II family. LysA subfamily. Homodimer. Pyridoxal 5'-phosphate serves as cofactor.

The catalysed reaction is meso-2,6-diaminopimelate + H(+) = L-lysine + CO2. The protein operates within amino-acid biosynthesis; L-lysine biosynthesis via DAP pathway; L-lysine from DL-2,6-diaminopimelate: step 1/1. Its function is as follows. Specifically catalyzes the decarboxylation of meso-diaminopimelate (meso-DAP) to L-lysine. The chain is Diaminopimelate decarboxylase from Buchnera aphidicola subsp. Baizongia pistaciae (strain Bp).